The sequence spans 300 residues: Enoyl-CoA hydratase domain-containing protein 3, mitochondrial (300 aa).

A mitochondrion-targeting transit peptide spans 1 to 66 (MAVVAGLRAF…RNIVLSNPRR (66 aa)). The segment at 34-53 (GSAGPAGSESEPRLTSTRQQ) is disordered. N6-succinyllysine is present on Lys-110.

The protein belongs to the enoyl-CoA hydratase/isomerase family.

Its subcellular location is the mitochondrion. May play a role in fatty acid biosynthesis and insulin sensitivity. The chain is Enoyl-CoA hydratase domain-containing protein 3, mitochondrial from Mus musculus (Mouse).